The primary structure comprises 96 residues: Co-chaperonin GroES (96 aa).

Belongs to the GroES chaperonin family. As to quaternary structure, heptamer of 7 subunits arranged in a ring. Interacts with the chaperonin GroEL.

It localises to the cytoplasm. Its function is as follows. Together with the chaperonin GroEL, plays an essential role in assisting protein folding. The GroEL-GroES system forms a nano-cage that allows encapsulation of the non-native substrate proteins and provides a physical environment optimized to promote and accelerate protein folding. GroES binds to the apical surface of the GroEL ring, thereby capping the opening of the GroEL channel. In Actinobacillus succinogenes (strain ATCC 55618 / DSM 22257 / CCUG 43843 / 130Z), this protein is Co-chaperonin GroES.